The primary structure comprises 408 residues: Arginine biosynthesis bifunctional protein ArgJ (408 aa).

Residues T162, K188, T199, E280, N403, and S408 each coordinate substrate. T199 functions as the Nucleophile in the catalytic mechanism.

Belongs to the ArgJ family. In terms of assembly, heterotetramer of two alpha and two beta chains.

Its subcellular location is the cytoplasm. It carries out the reaction N(2)-acetyl-L-ornithine + L-glutamate = N-acetyl-L-glutamate + L-ornithine. The catalysed reaction is L-glutamate + acetyl-CoA = N-acetyl-L-glutamate + CoA + H(+). It participates in amino-acid biosynthesis; L-arginine biosynthesis; L-ornithine and N-acetyl-L-glutamate from L-glutamate and N(2)-acetyl-L-ornithine (cyclic): step 1/1. The protein operates within amino-acid biosynthesis; L-arginine biosynthesis; N(2)-acetyl-L-ornithine from L-glutamate: step 1/4. In terms of biological role, catalyzes two activities which are involved in the cyclic version of arginine biosynthesis: the synthesis of N-acetylglutamate from glutamate and acetyl-CoA as the acetyl donor, and of ornithine by transacetylation between N(2)-acetylornithine and glutamate. This is Arginine biosynthesis bifunctional protein ArgJ from Ruegeria pomeroyi (strain ATCC 700808 / DSM 15171 / DSS-3) (Silicibacter pomeroyi).